A 1080-amino-acid chain; its full sequence is Histone-lysine N-methyltransferase, H3 lysine-4 specific (1080 aa).

Disordered stretches follow at residues 1 to 46 (MSNY…SQYN), 54 to 73 (NDGT…NNAS), and 78 to 121 (YATN…SSGS). The tract at residues 1-230 (MSNYYRRAHA…THRKCRNSLI (230 aa)) is binds SWD2. The segment covering 11–28 (SSGSYRQPQEQPQYSRSG) has biased composition (polar residues). Residues 29-46 (HYQYSNGHSHQQYSSQYN) show a composition bias toward low complexity. Over residues 54-67 (NDGTRRRYNDDRPH) the composition is skewed to basic and acidic residues. 2 stretches are compositionally biased toward polar residues: residues 78-87 (YATNNSQSGP) and 99-121 (RGMS…SSGS). The interval 230-569 (ILLPRISYDR…ALDHANFPEL (340 aa)) is binds RNA. Residues 356–569 (KKLQKLQENL…ALDHANFPEL (214 aa)) are binds SHG1. Phosphoserine is present on Ser-625. The interval 646–729 (AHLLNEETDS…DQNGSSDVLD (84 aa)) is disordered. Acidic residues predominate over residues 674-692 (DEEDENMTSSSSEEEEEEA). Over residues 693–712 (PDKKFKSESEPTTPESDHLH) the composition is skewed to basic and acidic residues. The interval 762–938 (MDLQNAIKDE…SLNQLNKRKK (177 aa)) is binds SPP1. A contributes to RNA binding region spans residues 762 to 938 (MDLQNAIKDE…SLNQLNKRKK (177 aa)). The segment at 762 to 938 (MDLQNAIKDE…SLNQLNKRKK (177 aa)) is required for catalytic activity. Thr-875 is subject to Phosphothreonine. 2 stretches are compositionally biased toward basic and acidic residues: residues 877 to 890 (ELCQ…KEPS) and 899 to 909 (SSRDNRASNRR). The tract at residues 877-909 (ELCQREESSNKEPSDSVPQEVSSSRDNRASNRR) is disordered. The RxxxRR motif signature appears at 904 to 909 (RASNRR). Positions 938–1055 (KPVMFARSAI…ASEELTYDYK (118 aa)) constitute an SET domain. Position 1054 (Tyr-1054) interacts with S-adenosyl-L-methionine. The region spanning 1064–1080 (ERLPCLCGAPNCKGFLN) is the Post-SET domain.

This sequence belongs to the class V-like SAM-binding methyltransferase superfamily. As to quaternary structure, component of the Set1C/COMPASS complex which consists of SET1(2), BRE2(2), SPP1(2), SDC1(1), SHG1(1), SWD1(1), SWD2(1), and SWD3(1). Interacts with MEC3.

It is found in the nucleus. The protein localises to the chromosome. It catalyses the reaction L-lysyl(4)-[histone H3] + 3 S-adenosyl-L-methionine = N(6),N(6),N(6)-trimethyl-L-lysyl(4)-[histone H3] + 3 S-adenosyl-L-homocysteine + 3 H(+). The enzyme catalyses N(6)-methyl-L-lysyl(4)-[histone H3] + S-adenosyl-L-methionine = N(6),N(6)-dimethyl-L-lysyl(4)-[histone H3] + S-adenosyl-L-homocysteine + H(+). The catalysed reaction is N(6),N(6)-dimethyl-L-lysyl(4)-[histone H3] + S-adenosyl-L-methionine = N(6),N(6),N(6)-trimethyl-L-lysyl(4)-[histone H3] + S-adenosyl-L-homocysteine + H(+). Catalytic component of the COMPASS (Set1C) complex that specifically mono-, di- and trimethylates histone H3 to form H3K4me1/2/3. Binds RNAs involved in chromosome segregation, splicing and transcriptional regulation; appears to bind transcripts both co- and post-transcriptionally and binding might negatively affect its histone methyltransferase activity. COMPASS recognizes ubiquitinated H2B on one face of the nucleosome which stimulates the methylation of H3 on the opposing face. Plays a role in telomere length maintenance and transcription elongation regulation. In Saccharomyces cerevisiae (strain ATCC 204508 / S288c) (Baker's yeast), this protein is Histone-lysine N-methyltransferase, H3 lysine-4 specific.